A 374-amino-acid chain; its full sequence is Probable neutral protease 2 homolog ARB_00849 (374 aa).

The N-terminal stretch at 1–19 is a signal peptide; that stretch reads MKFLTALSAIGALVATATA. The propeptide occupies 20-189; it reads AAVPNTPAKQ…KKSRGTIDKR (170 aa). 2 cysteine pairs are disulfide-bonded: Cys-197/Cys-268 and Cys-275/Cys-293. His-318 provides a ligand contact to Zn(2+). Glu-319 is a catalytic residue. Zn(2+)-binding residues include His-322 and Asp-333.

This sequence belongs to the peptidase M35 family. The cofactor is Zn(2+).

It localises to the secreted. It carries out the reaction Preferential cleavage of bonds with hydrophobic residues in P1'. Also 3-Asn-|-Gln-4 and 8-Gly-|-Ser-9 bonds in insulin B chain.. Probable secreted metalloprotease that shows high activities on basic nuclear substrates such as histone and protamine. May be involved in virulence. This Arthroderma benhamiae (strain ATCC MYA-4681 / CBS 112371) (Trichophyton mentagrophytes) protein is Probable neutral protease 2 homolog ARB_00849.